A 152-amino-acid chain; its full sequence is SsrA-binding protein (152 aa).

The protein belongs to the SmpB family.

It localises to the cytoplasm. In terms of biological role, required for rescue of stalled ribosomes mediated by trans-translation. Binds to transfer-messenger RNA (tmRNA), required for stable association of tmRNA with ribosomes. tmRNA and SmpB together mimic tRNA shape, replacing the anticodon stem-loop with SmpB. tmRNA is encoded by the ssrA gene; the 2 termini fold to resemble tRNA(Ala) and it encodes a 'tag peptide', a short internal open reading frame. During trans-translation Ala-aminoacylated tmRNA acts like a tRNA, entering the A-site of stalled ribosomes, displacing the stalled mRNA. The ribosome then switches to translate the ORF on the tmRNA; the nascent peptide is terminated with the 'tag peptide' encoded by the tmRNA and targeted for degradation. The ribosome is freed to recommence translation, which seems to be the essential function of trans-translation. The sequence is that of SsrA-binding protein from Rickettsia bellii (strain RML369-C).